Here is a 955-residue protein sequence, read N- to C-terminus: Glycine dehydrogenase (decarboxylating) (955 aa).

At lysine 702 the chain carries N6-(pyridoxal phosphate)lysine.

This sequence belongs to the GcvP family. The glycine cleavage system is composed of four proteins: P, T, L and H. Pyridoxal 5'-phosphate serves as cofactor.

It carries out the reaction N(6)-[(R)-lipoyl]-L-lysyl-[glycine-cleavage complex H protein] + glycine + H(+) = N(6)-[(R)-S(8)-aminomethyldihydrolipoyl]-L-lysyl-[glycine-cleavage complex H protein] + CO2. The glycine cleavage system catalyzes the degradation of glycine. The P protein binds the alpha-amino group of glycine through its pyridoxal phosphate cofactor; CO(2) is released and the remaining methylamine moiety is then transferred to the lipoamide cofactor of the H protein. This is Glycine dehydrogenase (decarboxylating) from Bradyrhizobium diazoefficiens (strain JCM 10833 / BCRC 13528 / IAM 13628 / NBRC 14792 / USDA 110).